A 290-amino-acid polypeptide reads, in one-letter code: Phosphonopyruvate hydrolase (290 aa).

Residue 40–44 (WGSGF) coordinates substrate. Asp-54 serves as the catalytic Nucleophile. Position 81 (Asp-81) interacts with Mg(2+). 3 residues coordinate substrate: Arg-155, His-186, and Arg-188.

As to quaternary structure, homodimer. Homotetramer. It depends on Co(2+) as a cofactor. Mg(2+) is required as a cofactor. Requires Mn(2+) as cofactor.

It catalyses the reaction 3-phosphonopyruvate + H2O = pyruvate + phosphate + H(+). With respect to regulation, partially inhibited by EDTA. Activity is restored by Co(2+), and to a lesser extent by Ni(2+) and Mg(2+). Unaffected by Cs(2+) and Ca(2+). Activity is reduced by Mn(2+) and Cu(2+). Hydrolyzes phosphonopyruvate. Not active towards phosphoenolpyruvate, glycerophosphate, phospho-L-serine or phosphoglycolic acid. This is Phosphonopyruvate hydrolase from Variovorax sp. (strain Pal2).